Here is a 461-residue protein sequence, read N- to C-terminus: Bifunctional protein GlmU (461 aa).

The interval 1–234 (MSLSVVILAA…EIEVEGANNR (234 aa)) is pyrophosphorylase. UDP-N-acetyl-alpha-D-glucosamine is bound by residues 8-11 (LAAG), lysine 22, glutamine 77, 82-83 (GT), 104-106 (YGD), glycine 141, glutamate 159, asparagine 174, and asparagine 232. Residue aspartate 106 participates in Mg(2+) binding. Mg(2+) is bound at residue asparagine 232. The segment at 235–255 (VQLATLERAYQARIAEELMIA) is linker. The N-acetyltransferase stretch occupies residues 256–461 (GASLRDPARI…AGWQRPVKKS (206 aa)). Residues arginine 338 and lysine 356 each contribute to the UDP-N-acetyl-alpha-D-glucosamine site. The active-site Proton acceptor is the histidine 368. 2 residues coordinate UDP-N-acetyl-alpha-D-glucosamine: tyrosine 371 and asparagine 382. Acetyl-CoA is bound by residues alanine 385, 391-392 (NY), serine 410, alanine 428, and arginine 445.

In the N-terminal section; belongs to the N-acetylglucosamine-1-phosphate uridyltransferase family. The protein in the C-terminal section; belongs to the transferase hexapeptide repeat family. In terms of assembly, homotrimer. It depends on Mg(2+) as a cofactor.

It localises to the cytoplasm. It carries out the reaction alpha-D-glucosamine 1-phosphate + acetyl-CoA = N-acetyl-alpha-D-glucosamine 1-phosphate + CoA + H(+). The catalysed reaction is N-acetyl-alpha-D-glucosamine 1-phosphate + UTP + H(+) = UDP-N-acetyl-alpha-D-glucosamine + diphosphate. The protein operates within nucleotide-sugar biosynthesis; UDP-N-acetyl-alpha-D-glucosamine biosynthesis; N-acetyl-alpha-D-glucosamine 1-phosphate from alpha-D-glucosamine 6-phosphate (route II): step 2/2. It participates in nucleotide-sugar biosynthesis; UDP-N-acetyl-alpha-D-glucosamine biosynthesis; UDP-N-acetyl-alpha-D-glucosamine from N-acetyl-alpha-D-glucosamine 1-phosphate: step 1/1. Its pathway is bacterial outer membrane biogenesis; LPS lipid A biosynthesis. Functionally, catalyzes the last two sequential reactions in the de novo biosynthetic pathway for UDP-N-acetylglucosamine (UDP-GlcNAc). The C-terminal domain catalyzes the transfer of acetyl group from acetyl coenzyme A to glucosamine-1-phosphate (GlcN-1-P) to produce N-acetylglucosamine-1-phosphate (GlcNAc-1-P), which is converted into UDP-GlcNAc by the transfer of uridine 5-monophosphate (from uridine 5-triphosphate), a reaction catalyzed by the N-terminal domain. This chain is Bifunctional protein GlmU, found in Colwellia psychrerythraea (strain 34H / ATCC BAA-681) (Vibrio psychroerythus).